Here is a 318-residue protein sequence, read N- to C-terminus: Beta-galactosidase small subunit (318 aa).

The protein belongs to the bacterial beta-galactosidase small subunit family. Heterodimer of a large (LacL) and a small subunit (LacM).

The enzyme catalyses Hydrolysis of terminal non-reducing beta-D-galactose residues in beta-D-galactosides.. Functionally, component of a beta-galactosidase. This is Beta-galactosidase small subunit from Lactobacillus helveticus (Lactobacillus suntoryeus).